We begin with the raw amino-acid sequence, 622 residues long: MSRIPTRELGRYLLQGQICQRGCVASSVSKSRAKQLGRHPLLPHDRHQPTQARHAHTVTTTATPTQLAPSVPLRKKLKDEAKQLKKNAKKDNRKGSNQTVDGWELTVGIEIHAQLNTARKLFSPAATSFNDAPNSHVALFDLSMPGSQPLLQKETLIPALRAALALNCDIQPISRFDRKHYFWWDQPSGYQITQYYEPFARNGQITLFARDGIAPEDGESVTIGIQQVQMEQDTAKTLAQPGDTHWLDFNRVGVPLIEIITKPELHHPRTAAVFVRKMQTLLNAVDACVSGMETGGLRADVNVSVRRTSDASAPLGTRTEIKNLSTIKAVEDAIIAERDRQIQELEAGGTIAGETRGWTLGTKQTRRLRGKEGEVDYRYMPDPDLGPLIIADDLVDHIRKSVAYLPDHELSELADVYGLTAKDALSLLSLDNGGRIEYFYNVVESFGTRLQQGTEGGLDVRAYAPLAANWILHEFGRLVDDDSDNESTPFEVSPDGQCERVPVESLAELLFHLQQKKITGKVAKELLTALHQGNLADAENITAAIDAHDLWFHELSTEEYQELAALAVEGEDKVLREFRDKKVFPQGKLMYLVGKMLRLGATERIDPSNAEKFMRAKVEELL.

The N-terminal 54 residues, 1–54 (MSRIPTRELGRYLLQGQICQRGCVASSVSKSRAKQLGRHPLLPHDRHQPTQARH), are a transit peptide targeting the mitochondrion. The tract at residues 30–67 (KSRAKQLGRHPLLPHDRHQPTQARHAHTVTTTATPTQL) is disordered. Low complexity predominate over residues 57–67 (TVTTTATPTQL).

It belongs to the GatB/GatE family. GatB subfamily. Subunit of the heterotrimeric GatCAB amidotransferase (AdT) complex, composed of A, B and C subunits.

Its subcellular location is the mitochondrion. It carries out the reaction L-glutamyl-tRNA(Gln) + L-glutamine + ATP + H2O = L-glutaminyl-tRNA(Gln) + L-glutamate + ADP + phosphate + H(+). Allows the formation of correctly charged Gln-tRNA(Gln) through the transamidation of misacylated Glu-tRNA(Gln) in the mitochondria. The reaction takes place in the presence of glutamine and ATP through an activated gamma-phospho-Glu-tRNA(Gln). The protein is Glutamyl-tRNA(Gln) amidotransferase subunit B, mitochondrial of Verticillium alfalfae (strain VaMs.102 / ATCC MYA-4576 / FGSC 10136) (Verticillium wilt of alfalfa).